The sequence spans 663 residues: UvrABC system protein B (663 aa).

A Helicase ATP-binding domain is found at 26 to 183 (DGLESGLAKQ…KRLAEMQYTR (158 aa)). 39–46 (GVTGSGKT) is an ATP binding site. The Beta-hairpin signature appears at 92–115 (YYDYYQPEAYVPASDTFIEKDASI). The 167-residue stretch at 430–596 (QVDDLMSEIR…GINKSVEDIL (167 aa)) folds into the Helicase C-terminal domain. The UVR domain maps to 624-659 (AKQINALEKQMYAHAQNMEFELAAKIRDEYLLLKEQ).

This sequence belongs to the UvrB family. Forms a heterotetramer with UvrA during the search for lesions. Interacts with UvrC in an incision complex.

It localises to the cytoplasm. In terms of biological role, the UvrABC repair system catalyzes the recognition and processing of DNA lesions. A damage recognition complex composed of 2 UvrA and 2 UvrB subunits scans DNA for abnormalities. Upon binding of the UvrA(2)B(2) complex to a putative damaged site, the DNA wraps around one UvrB monomer. DNA wrap is dependent on ATP binding by UvrB and probably causes local melting of the DNA helix, facilitating insertion of UvrB beta-hairpin between the DNA strands. Then UvrB probes one DNA strand for the presence of a lesion. If a lesion is found the UvrA subunits dissociate and the UvrB-DNA preincision complex is formed. This complex is subsequently bound by UvrC and the second UvrB is released. If no lesion is found, the DNA wraps around the other UvrB subunit that will check the other stand for damage. This Legionella pneumophila (strain Corby) protein is UvrABC system protein B.